The primary structure comprises 447 residues: Chitobiosyldiphosphodolichol beta-mannosyltransferase (447 aa).

The Cytoplasmic segment spans residues 1–2; it reads MT. Residues 3–23 traverse the membrane as a helical; Signal-anchor for type II membrane protein segment; it reads LVLLLSIFAICFSSVAFIQLL. Topologically, residues 24–447 are lumenal; it reads PTRREKKSSE…IAGTFLGLVT (424 aa).

This sequence belongs to the glycosyltransferase group 1 family. Glycosyltransferase 33 subfamily.

The protein resides in the endoplasmic reticulum membrane. The catalysed reaction is an N,N'-diacetylchitobiosyl-diphospho-di-trans,poly-cis-dolichol + GDP-alpha-D-mannose = a beta-D-Man-(1-&gt;4)-beta-D-GlcNAc-(1-&gt;4)-alpha-D-GlcNAc-diphospho-di-trans,poly-cis-dolichol + GDP + H(+). It functions in the pathway protein modification; protein glycosylation. Functionally, participates in the formation of the lipid-linked precursor oligosaccharide for N-glycosylation. Involved in assembling the dolichol-pyrophosphate-GlcNAc(2)-Man(5) intermediate on the cytoplasmic surface of the ER. The polypeptide is Chitobiosyldiphosphodolichol beta-mannosyltransferase (Arthroderma benhamiae (strain ATCC MYA-4681 / CBS 112371) (Trichophyton mentagrophytes)).